The primary structure comprises 103 residues: Small ribosomal subunit protein uS10 (103 aa).

The protein belongs to the universal ribosomal protein uS10 family. Part of the 30S ribosomal subunit.

In terms of biological role, involved in the binding of tRNA to the ribosomes. This is Small ribosomal subunit protein uS10 from Idiomarina loihiensis (strain ATCC BAA-735 / DSM 15497 / L2-TR).